We begin with the raw amino-acid sequence, 276 residues long: MATYIVGDVHGCFDELQALLELAQFKKNKDQLWITGDLVGRGPKSLETLRFVKSLGDSAKIVLGNHDLHLLAIHQGIHSDKESDKLSALLNAPDCDELLTWLRFQPLFRRHPEFNFVMVHAGISPQWTIQQAQGYAQEVQNILQGNEFKKLLKNMYGNHPASWNDSSQGIKRLRFIINALTRMRYCLLDGSLEFYSKLAPEQTDSTIIKPWFEINTLDQSSDIIFGHWAALLGTGTKQGIYALDTGCVWGNSLSMLRWQDKKMFSFACQRQRVHSK.

Belongs to the Ap4A hydrolase family.

The catalysed reaction is P(1),P(4)-bis(5'-adenosyl) tetraphosphate + H2O = 2 ADP + 2 H(+). Hydrolyzes diadenosine 5',5'''-P1,P4-tetraphosphate to yield ADP. In Psychromonas ingrahamii (strain DSM 17664 / CCUG 51855 / 37), this protein is Bis(5'-nucleosyl)-tetraphosphatase, symmetrical.